Consider the following 406-residue polypeptide: Na(+)/H(+) antiporter NhaA (406 aa).

12 helical membrane-spanning segments follow: residues 29-49 (FAGILLIIAFTLAIIVSNNIF), 75-95 (FIELVNDGLMTFFFLLIGLEM), 111-131 (ILPAVAALGGVVVPVLIYMFF), 141-161 (GWAIPIATDTAFVLGILSFFS), 170-190 (AFIIGFSLIDDAFALIILALF), 195-215 (INTPALLISSVIIFILFILNY), 220-240 (QLFYYIIVGLLLWISMVESGI), 242-262 (GTLCGAIIALFIPVNIKGEFN), 278-298 (YFILPLFVFMNSGILLEYFAF), 306-326 (ILALIYGIIFGLFVGKQLGIM), 349-369 (FYSIAILGGIGFTLSLFIGSI), and 382-402 (AAVIIGSLISALFGVAVLKYC).

This sequence belongs to the NhaA Na(+)/H(+) (TC 2.A.33) antiporter family.

The protein localises to the cell inner membrane. The enzyme catalyses Na(+)(in) + 2 H(+)(out) = Na(+)(out) + 2 H(+)(in). Its function is as follows. Na(+)/H(+) antiporter that extrudes sodium in exchange for external protons. This chain is Na(+)/H(+) antiporter NhaA, found in Rickettsia massiliae (strain Mtu5).